The chain runs to 330 residues: Elongation factor Ts, mitochondrial (330 aa).

A mitochondrion-targeting transit peptide spans 1-16 (MYRNCRKAFTFSLRHY).

The protein belongs to the EF-Ts family.

The protein resides in the mitochondrion. Functionally, associates with the EF-Tu.GDP complex and induces the exchange of GDP to GTP. It remains bound to the aminoacyl-tRNA.EF-Tu.GTP complex up to the GTP hydrolysis stage on the ribosome. In Laccaria bicolor (strain S238N-H82 / ATCC MYA-4686) (Bicoloured deceiver), this protein is Elongation factor Ts, mitochondrial.